We begin with the raw amino-acid sequence, 254 residues long: 3-dehydroquinate dehydratase (254 aa).

Residues 47-49 (EFR) and Arg83 contribute to the 3-dehydroquinate site. The active-site Proton donor/acceptor is His144. Catalysis depends on Lys171, which acts as the Schiff-base intermediate with substrate. 3-dehydroquinate is bound by residues Arg213, Ser232, and Gln236.

The protein belongs to the type-I 3-dehydroquinase family. As to quaternary structure, homodimer.

It carries out the reaction 3-dehydroquinate = 3-dehydroshikimate + H2O. The protein operates within metabolic intermediate biosynthesis; chorismate biosynthesis; chorismate from D-erythrose 4-phosphate and phosphoenolpyruvate: step 3/7. Involved in the third step of the chorismate pathway, which leads to the biosynthesis of aromatic amino acids. Catalyzes the cis-dehydration of 3-dehydroquinate (DHQ) and introduces the first double bond of the aromatic ring to yield 3-dehydroshikimate. This is 3-dehydroquinate dehydratase from Neisseria gonorrhoeae (strain ATCC 700825 / FA 1090).